Here is a 1052-residue protein sequence, read N- to C-terminus: uncharacterized protein (1052 aa).

This sequence belongs to the IIV-6 050L family.

This is an uncharacterized protein from Invertebrate iridescent virus 6 (IIV-6).